Here is a 149-residue protein sequence, read N- to C-terminus: MAVKPSANLGKAFQLPHPFNSCVYIQIPPQPTWSINEYWERNPNKQYLDESDTTYLEELTLTPIEKHQALEKLNTIISAADRLQEVDTKNVDPMYTCVDEREMYMNSGQDGETVNKEEILGNAHKIFQDYFTAPTSEKMRSSSDLNAKE.

This sequence belongs to the GatC family. As to quaternary structure, subunit of the heterotrimeric GatCAB amidotransferase (AdT) complex, composed of A, B and C subunits.

It localises to the mitochondrion. It carries out the reaction L-glutamyl-tRNA(Gln) + L-glutamine + ATP + H2O = L-glutaminyl-tRNA(Gln) + L-glutamate + ADP + phosphate + H(+). Functionally, allows the formation of correctly charged Gln-tRNA(Gln) through the transamidation of misacylated Glu-tRNA(Gln) in the mitochondria. The reaction takes place in the presence of glutamine and ATP through an activated gamma-phospho-Glu-tRNA(Gln). The sequence is that of Glutamyl-tRNA(Gln) amidotransferase subunit C, mitochondrial from Trichoplax adhaerens (Trichoplax reptans).